The primary structure comprises 499 residues: Histidine ammonia-lyase (499 aa).

The 5-imidazolinone (Ala-Gly) cross-link spans 142–144 (ASG). Ser-143 is modified (2,3-didehydroalanine (Ser)).

It belongs to the PAL/histidase family. Contains an active site 4-methylidene-imidazol-5-one (MIO), which is formed autocatalytically by cyclization and dehydration of residues Ala-Ser-Gly.

The protein resides in the cytoplasm. It carries out the reaction L-histidine = trans-urocanate + NH4(+). It functions in the pathway amino-acid degradation; L-histidine degradation into L-glutamate; N-formimidoyl-L-glutamate from L-histidine: step 1/3. The protein is Histidine ammonia-lyase of Staphylococcus saprophyticus subsp. saprophyticus (strain ATCC 15305 / DSM 20229 / NCIMB 8711 / NCTC 7292 / S-41).